The chain runs to 174 residues: Transcriptional repressor NrdR (174 aa).

A zinc finger spans residues 3-34 (CPFCQHNDTRVIDSRVSEDGTTIRRRRECEAC). In terms of domain architecture, ATP-cone spans 49 to 139 (PTVVKSDGGR…VYRSFQDVAD (91 aa)).

Belongs to the NrdR family. Zn(2+) is required as a cofactor.

Its function is as follows. Negatively regulates transcription of bacterial ribonucleotide reductase nrd genes and operons by binding to NrdR-boxes. The chain is Transcriptional repressor NrdR from Xanthomonas axonopodis pv. citri (strain 306).